We begin with the raw amino-acid sequence, 95 residues long: Co-chaperonin GroES (95 aa).

This sequence belongs to the GroES chaperonin family. In terms of assembly, heptamer of 7 subunits arranged in a ring. Interacts with the chaperonin GroEL.

It localises to the cytoplasm. Its function is as follows. Together with the chaperonin GroEL, plays an essential role in assisting protein folding. The GroEL-GroES system forms a nano-cage that allows encapsulation of the non-native substrate proteins and provides a physical environment optimized to promote and accelerate protein folding. GroES binds to the apical surface of the GroEL ring, thereby capping the opening of the GroEL channel. The polypeptide is Co-chaperonin GroES (Pelobacter propionicus (strain DSM 2379 / NBRC 103807 / OttBd1)).